Here is a 351-residue protein sequence, read N- to C-terminus: MKKRVIAVSAIALASVAVLAGCRSHDASGTSGKVKTDLKAAIVTDANGVNDRSFNQSAWEGLQSWGKENNLKKGTGYTYFQSNSASDYTTNYNSAEQQGYKLLFGIGFSLQDATSAAAKNNPKSNFVIVDSVIKDQKNVTSATFADNESAYLAGVAAAKATKTNKIGFIGGMQSDVITRFEKGYVAGAKSVKSDIKVDIQYAGSFSDAAKGKTIAAAMYGSGDDVVYQCAGGVGTGVFSEAKALNSSKNEADKVWVIGVDQDQEYLGKYKSKDGKDSNFVLVSTIKEVGTVVKDIADKTKDGKFPGGTIVTYNLKNGGVDLGLDNATSEIKDAVAKAKTDIIDGKITVPSK.

The N-terminal stretch at 1–21 (MKKRVIAVSAIALASVAVLAG) is a signal peptide. The N-palmitoyl cysteine moiety is linked to residue cysteine 22. Cysteine 22 is lipidated: S-diacylglycerol cysteine.

This sequence belongs to the BMP lipoprotein family. The complex is composed of two ATP-binding proteins (NupA), two transmembrane proteins (NupB and NupC) and a solute-binding protein (BmpA).

The protein localises to the cell membrane. Functionally, part of an ABC transporter complex involved in the uptake of all common nucleosides. In Lactococcus lactis subsp. cremoris (strain MG1363), this protein is ABC transporter nucleoside-binding protein BmpA.